Consider the following 510-residue polypeptide: MKTITLRPGQMTLADLRHIYQHPVHITLDESAYVPIQQSVDCVQAILAEQRTAYGINTGFGLLASTRIATEDLENLQRSIVLSHAAGVGEANDDAIVRLIMVLKINSLARGFSGIRLEVIQALITLVNAGVYPHIPLKGSVGASGDLAPLAHMSLLLLGEGKARYQGEWLPAHTALAQAGLQPLTLAAKEGLALLNGTQVSAAYALRGLFEAEDLYAAASVFGCLTVDAALGSRSPFDARIHAVRGQRGQIDAASTYRHLLGERSEISESHKNCDKVQDPYSLRCQPQVMGACLGQIRQAAEVLAIESNAVSDNPLVFAEQGDVLSGGNFHAEPVAMAADNLALALAEIGSLSECRISLMMDKHMSQLPPFLVENGGVNSGFMIAQVTAAALTSENKGLAFPASVDSIPTSANQEDHVSMAPRAGKRLWEMAENVRNILAIEWLAACQGLDLRKGLRTSAILEPARQLLRQHVTYYDKDRFFAPDIEVASQLIAQRHMNELMPAKLLPSL.

Positions 143–145 form a cross-link, 5-imidazolinone (Ala-Gly); it reads ASG. Residue S144 is modified to 2,3-didehydroalanine (Ser).

Belongs to the PAL/histidase family. Contains an active site 4-methylidene-imidazol-5-one (MIO), which is formed autocatalytically by cyclization and dehydration of residues Ala-Ser-Gly.

It localises to the cytoplasm. It catalyses the reaction L-histidine = trans-urocanate + NH4(+). The protein operates within amino-acid degradation; L-histidine degradation into L-glutamate; N-formimidoyl-L-glutamate from L-histidine: step 1/3. The polypeptide is Histidine ammonia-lyase (Yersinia pseudotuberculosis serotype I (strain IP32953)).